The primary structure comprises 358 residues: tRNA-specific 2-thiouridylase MnmA 2 (358 aa).

Residues 11–18 (GMSGGVDS) and Met37 each bind ATP. Cys106 acts as the Nucleophile in catalysis. A disulfide bridge connects residues Cys106 and Cys202. Gly130 contacts ATP. The tract at residues 152-154 (KDQ) is interaction with tRNA. Cys202 serves as the catalytic Cysteine persulfide intermediate. Positions 308–309 (RY) are interaction with tRNA.

It belongs to the MnmA/TRMU family.

Its subcellular location is the cytoplasm. It catalyses the reaction S-sulfanyl-L-cysteinyl-[protein] + uridine(34) in tRNA + AH2 + ATP = 2-thiouridine(34) in tRNA + L-cysteinyl-[protein] + A + AMP + diphosphate + H(+). Functionally, catalyzes the 2-thiolation of uridine at the wobble position (U34) of tRNA, leading to the formation of s(2)U34. The polypeptide is tRNA-specific 2-thiouridylase MnmA 2 (Clostridium tetani (strain Massachusetts / E88)).